Here is a 149-residue protein sequence, read N- to C-terminus: UPF0756 membrane protein Nther_1957 (149 aa).

A run of 4 helical transmembrane segments spans residues 5–25 (IVVLLFIFLIALIGKNDLVAT), 52–72 (LGILLLTLSVLTPFAAGDIMP), 85–105 (LIAVFSGIVASYLTGHGVELL), and 111–131 (VMVGLIVGSIIGASFLKGVPA).

The protein belongs to the UPF0756 family.

It localises to the cell membrane. The protein is UPF0756 membrane protein Nther_1957 of Natranaerobius thermophilus (strain ATCC BAA-1301 / DSM 18059 / JW/NM-WN-LF).